A 173-amino-acid polypeptide reads, in one-letter code: Lithostathine-2 (173 aa).

An N-terminal signal peptide occupies residues 1-22 (MAQNNVYLILFLCLMFLSYSQG). The C-type lectin domain maps to 41-171 (INCPEGANAY…EAQYSFVCKF (131 aa)). Disulfide bonds link C43/C54, C71/C169, and C144/C161.

As to expression, expressed only in regenerating islets and normal exocrine pancreas, but not in normal pancreatic islets. Expressed strongly in pancreas, weakly in liver, but not at all in gall bladder.

It is found in the secreted. Its function is as follows. Might act as an inhibitor of spontaneous calcium carbonate precipitation. This chain is Lithostathine-2 (Reg2), found in Mus musculus (Mouse).